Reading from the N-terminus, the 156-residue chain is Ribonuclease H (156 aa).

The region spanning 1-142 (MGKQVEIFTD…CDELARAAAN (142 aa)) is the RNase H type-1 domain. Residues Asp-10, Glu-48, Asp-70, and Asp-134 each contribute to the Mg(2+) site.

Belongs to the RNase H family. Monomer. Mg(2+) serves as cofactor.

The protein resides in the cytoplasm. The catalysed reaction is Endonucleolytic cleavage to 5'-phosphomonoester.. Its function is as follows. Endonuclease that specifically degrades the RNA of RNA-DNA hybrids. This Photorhabdus laumondii subsp. laumondii (strain DSM 15139 / CIP 105565 / TT01) (Photorhabdus luminescens subsp. laumondii) protein is Ribonuclease H.